The sequence spans 135 residues: Basic phospholipase A2 KBf-VA (135 aa).

Cystine bridges form between C28/C87, C42/C134, C44/C60, C59/C115, C66/C108, C76/C101, and C94/C106. Positions 43, 45, and 47 each coordinate Ca(2+). H63 is an active-site residue. D64 lines the Ca(2+) pocket. The active site involves D109.

The protein belongs to the phospholipase A2 family. Group I subfamily. D49 sub-subfamily. Requires Ca(2+) as cofactor. Expressed by the venom gland.

It localises to the secreted. The catalysed reaction is a 1,2-diacyl-sn-glycero-3-phosphocholine + H2O = a 1-acyl-sn-glycero-3-phosphocholine + a fatty acid + H(+). Its function is as follows. Snake venom phospholipase A2 (PLA2) that inhibits neuromuscular transmission by blocking acetylcholine release from the nerve termini. PLA2 catalyzes the calcium-dependent hydrolysis of the 2-acyl groups in 3-sn-phosphoglycerides. This Bungarus fasciatus (Banded krait) protein is Basic phospholipase A2 KBf-VA.